The sequence spans 394 residues: Mannosyl-3-phosphoglycerate synthase (394 aa).

It belongs to the glycosyltransferase 2 family. Mg(2+) serves as cofactor.

It localises to the cytoplasm. The catalysed reaction is (2R)-3-phosphoglycerate + GDP-alpha-D-mannose = 2-O-(alpha-D-mannosyl)-3-phosphoglycerate + GDP + H(+). The protein operates within carbohydrate biosynthesis; 2-(alpha-D-mannosyl)-D-glycerate biosynthesis; 2-(alpha-D-mannosyl)-D-glycerate from GDP-alpha-D-mannose (MPG route): step 1/2. Functionally, transfers a mannosyl group from GDP-mannose to phosphoglycerate to form mannosyl-3-phosphoglycerate (MPG). The enzyme is absolutely specific for GDP-mannose and 3-phosphoglycerate, and transfers the mannosyl group with retention of configuration. The chain is Mannosyl-3-phosphoglycerate synthase (mngA) from Pyrococcus horikoshii (strain ATCC 700860 / DSM 12428 / JCM 9974 / NBRC 100139 / OT-3).